The sequence spans 635 residues: Cationic amino acid transporter 4 (635 aa).

The next 3 helical transmembrane spans lie at Leu42 to Val62, Met66 to Ala86, and Ile113 to Val133. N-linked (GlcNAc...) asparagine glycosylation is found at Asn146, Asn151, and Asn195. Residues Thr197–Ala217 traverse the membrane as a helical segment. An N-linked (GlcNAc...) asparagine glycan is attached at Asn221. Helical transmembrane passes span Phe229–Val249, Met270–Leu290, Gly318–Phe338, Gln365–Leu385, and Val391–Val411. Phosphoserine is present on residues Ser422 and Ser427. A run of 4 helical transmembrane segments spans residues Val478 to Phe498, Trp508 to Leu528, Thr539 to Leu559, and Thr567 to Ile587.

It belongs to the amino acid-polyamine-organocation (APC) superfamily. Cationic amino acid transporter (CAT) (TC 2.A.3.3) family.

The protein resides in the membrane. Functionally, involved in the transport of the cationic amino acids (arginine, lysine and ornithine). This chain is Cationic amino acid transporter 4 (Slc7a4), found in Mus musculus (Mouse).